The primary structure comprises 555 residues: E3 ubiquitin-protein ligase ARIH1 (555 aa).

The span at 1–47 (MDSDEGYNYEFDEDEECSEEDSGAEEEEDEDDDEPDDDNLDLGEVEL) shows a compositional bias: acidic residues. The tract at residues 1-93 (MDSDEGYNYE…GGGGGPGHEQ (93 aa)) is disordered. Over residues 65 to 90 (ETGGGGGSALGPGGGGGGGGGGGGPG) the composition is skewed to gly residues. The segment at 103–151 (TAEQILQHMVECIREVNEVIQNPATITRILLSHFNWDKEKLMERYFDGN) is UBA-like. Position 140 is an N6-acetyllysine (Lys-140). The TRIAD supradomain stretch occupies residues 180 to 391 (QDMPCQICYL…SAWYNCNRYN (212 aa)). Positions 184, 187, 201, 203, 206, 209, 229, 234, 274, 279, 295, 297, 302, 305, 310, 315, 342, and 345 each coordinate Zn(2+). The RING-type 1 zinc-finger motif lies at 184–234 (CQICYLNYPNSYFTGLECGHKFCMQCWSEYLTTKIMEEGMGQTISCPAHGC). An IBR-type zinc finger spans residues 254–315 (LKYQHLITNS…GENWHDPVKC (62 aa)). An RING-type 2; atypical zinc finger spans residues 342 to 373 (CPKCHVTIEKDGGCNHMVCRNQNCKAEFCWVC). Residue Cys-355 is part of the active site. Zn(2+) contacts are provided by Cys-360, Cys-365, Cys-370, Cys-373, His-380, and Cys-387. The interval 406–555 (RAALQRYLFY…EKDLWEYIED (150 aa)) is ariadne domain.

It belongs to the RBR family. Ariadne subfamily. Interacts (via the first RING-type zinc finger) with UBE2L3. Associates with cullin-RING ubiquitin ligase (CRL) complexes containing CUL1, CUL2 and CUL3. Interacts with neddylated CUL1. Interacts with neddylated CUL2. Interacts with neddylated CUL3. Interacts with neddylated CUL4A.

It localises to the cytoplasm. Its subcellular location is the nucleus. It is found in the cajal body. The enzyme catalyses [E2 ubiquitin-conjugating enzyme]-S-ubiquitinyl-L-cysteine + [acceptor protein]-L-lysine = [E2 ubiquitin-conjugating enzyme]-L-cysteine + [acceptor protein]-N(6)-ubiquitinyl-L-lysine.. It participates in protein modification; protein ubiquitination. With respect to regulation, autoinhibited by the ariadne domain, which masks the second RING-type zinc finger that contains the active site and inhibits the E3 activity. Inhibition is relieved upon binding to neddylated cullin-RING ubiquitin ligase complexes, which activate the E3 ligase activity of ARIH1. Functionally, E3 ubiquitin-protein ligase, which catalyzes ubiquitination of target proteins together with ubiquitin-conjugating enzyme E2 UBE2L3. Acts as an atypical E3 ubiquitin-protein ligase by working together with cullin-RING ubiquitin ligase (CRL) complexes and initiating ubiquitination of CRL substrates: associates with CRL complexes and specifically mediates addition of the first ubiquitin on CRLs targets. The initial ubiquitin is then elongated by CDC34/UBE2R1 and UBE2R2. E3 ubiquitin-protein ligase activity is activated upon binding to neddylated cullin-RING ubiquitin ligase complexes. Plays a role in protein translation in response to DNA damage by mediating ubiquitination of EIF4E2, the consequences of EIF4E2 ubiquitination are however unclear. According to a report, EIF4E2 ubiquitination leads to promote EIF4E2 cap-binding and protein translation arrest. According to another report EIF4E2 ubiquitination leads to its subsequent degradation. Acts as the ligase involved in ISGylation of EIF4E2. In vitro, controls the degradation of the LINC (LInker of Nucleoskeleton and Cytoskeleton) complex member SUN2 and may therefore have a role in the formation and localization of the LINC complex, and as a consequence, may act in nuclear subcellular localization and nuclear morphology. In Bos taurus (Bovine), this protein is E3 ubiquitin-protein ligase ARIH1 (ARIH1).